The following is a 502-amino-acid chain: Glycerol kinase (502 aa).

ADP is bound at residue Thr14. ATP contacts are provided by Thr14, Thr15, and Ser16. Residue Thr14 participates in sn-glycerol 3-phosphate binding. Position 18 (Arg18) interacts with ADP. 4 residues coordinate sn-glycerol 3-phosphate: Arg84, Glu85, Tyr136, and Asp246. Residues Arg84, Glu85, Tyr136, Asp246, and Gln247 each coordinate glycerol. ADP-binding residues include Thr268 and Gly311. ATP is bound by residues Thr268, Gly311, Gln315, and Gly412. The ADP site is built by Gly412 and Asn416.

It belongs to the FGGY kinase family. Homotetramer and homodimer (in equilibrium). Heterodimer with EIIA-Glc. Binds 1 zinc ion per glycerol kinase EIIA-Glc dimer. The zinc ion is important for dimerization.

It catalyses the reaction glycerol + ATP = sn-glycerol 3-phosphate + ADP + H(+). It functions in the pathway polyol metabolism; glycerol degradation via glycerol kinase pathway; sn-glycerol 3-phosphate from glycerol: step 1/1. Activity of this regulatory enzyme is affected by several metabolites. Allosterically and non-competitively inhibited by fructose 1,6-bisphosphate (FBP) and unphosphorylated phosphocarrier protein EIIA-Glc (III-Glc), an integral component of the bacterial phosphotransferase (PTS) system. Its function is as follows. Key enzyme in the regulation of glycerol uptake and metabolism. Catalyzes the phosphorylation of glycerol to yield sn-glycerol 3-phosphate. In Escherichia coli O81 (strain ED1a), this protein is Glycerol kinase.